A 377-amino-acid chain; its full sequence is Alternative oxidase, mitochondrial (377 aa).

The helical transmembrane segment at Leu149–Leu169 threads the bilayer. Fe cation contacts are provided by Glu156, Glu195, and His198. Residues Ile214–Ser234 form a helical membrane-spanning segment. 3 residues coordinate Fe cation: Glu246, Glu303, and His306.

The protein belongs to the alternative oxidase family. The cofactor is Fe cation.

It localises to the mitochondrion inner membrane. Functionally, catalyzes cyanide-resistant oxygen consumption. May increase respiration when the cytochrome respiratory pathway is restricted, or in response to low temperatures. The polypeptide is Alternative oxidase, mitochondrial (AOX1) (Pyricularia oryzae (strain 70-15 / ATCC MYA-4617 / FGSC 8958) (Rice blast fungus)).